Here is a 243-residue protein sequence, read N- to C-terminus: Ubiquinone/menaquinone biosynthesis C-methyltransferase UbiE (243 aa).

Residues threonine 69, aspartate 90, and 116–117 (DA) contribute to the S-adenosyl-L-methionine site.

This sequence belongs to the class I-like SAM-binding methyltransferase superfamily. MenG/UbiE family.

The catalysed reaction is a 2-demethylmenaquinol + S-adenosyl-L-methionine = a menaquinol + S-adenosyl-L-homocysteine + H(+). The enzyme catalyses a 2-methoxy-6-(all-trans-polyprenyl)benzene-1,4-diol + S-adenosyl-L-methionine = a 5-methoxy-2-methyl-3-(all-trans-polyprenyl)benzene-1,4-diol + S-adenosyl-L-homocysteine + H(+). It functions in the pathway quinol/quinone metabolism; menaquinone biosynthesis; menaquinol from 1,4-dihydroxy-2-naphthoate: step 2/2. The protein operates within cofactor biosynthesis; ubiquinone biosynthesis. Methyltransferase required for the conversion of demethylmenaquinol (DMKH2) to menaquinol (MKH2) and the conversion of 2-polyprenyl-6-methoxy-1,4-benzoquinol (DDMQH2) to 2-polyprenyl-3-methyl-6-methoxy-1,4-benzoquinol (DMQH2). This chain is Ubiquinone/menaquinone biosynthesis C-methyltransferase UbiE, found in Cupriavidus necator (strain ATCC 17699 / DSM 428 / KCTC 22496 / NCIMB 10442 / H16 / Stanier 337) (Ralstonia eutropha).